Reading from the N-terminus, the 329-residue chain is Microtubule-associated protein RP/EB family member 1C (329 aa).

The 103-residue stretch at 13-115 (FVGRSEILAW…FMQWMKKYCD (103 aa)) folds into the Calponin-homology (CH) domain. The span at 130–141 (REASKGGKEATK) shows a compositional bias: basic and acidic residues. The segment at 130–203 (REASKGGKEA…SAKQSKPVPA (74 aa)) is disordered. Positions 174–185 (SNNTGTHHSSTG) are enriched in low complexity. The region spanning 193–263 (PSAKQSKPVP…LYAADGEDVG (71 aa)) is the EB1 C-terminal domain. The required for nuclear localization stretch occupies residues 289–311 (KRKLIVNLDVDVAAITTLSPRQR).

The protein belongs to the MAPRE family. In terms of assembly, homodimer. In terms of tissue distribution, highly expressed in the root and shoot meristems, in guard cells of leaf stomata, pollen grains and pollen tubes.

It is found in the nucleus. Its subcellular location is the cytoplasm. It localises to the cytoskeleton. The protein resides in the spindle. The protein localises to the phragmoplast. Its function is as follows. Plant-specific EB1 subtype that functions preferentially at early stages of plant mitosis by regulating spindle positioning and chromosome segregation. Accumulates in the prophase nucleus and is required to maintain spindle bipolarity during premetaphase and/or metaphase and for efficient segregation of chromosomes at anaphase. May play a role in the dynamics of microtubule network in elongating pollen tubes. The chain is Microtubule-associated protein RP/EB family member 1C (EB1C) from Arabidopsis thaliana (Mouse-ear cress).